A 193-amino-acid polypeptide reads, in one-letter code: UMP-CMP kinase (193 aa).

Residue 13–18 coordinates ATP; sequence GAGKGT. An NMP region spans residues 33–63; that stretch reads SAGDLLRDERKKPDSQYGELIESYIRDGKIV. A ribonucleoside 5'-phosphate contacts are provided by residues Arg39, 61-63, and 93-96; these read KIV and GFPR. Asn100 contacts CMP. Positions 133–143 are LID; it reads ERGKSSGRSDD. Arg134 contributes to the ATP binding site. Residues Arg140 and Arg151 each coordinate a ribonucleoside 5'-phosphate. Lys179 lines the ATP pocket.

This sequence belongs to the adenylate kinase family. UMP-CMP kinase subfamily. As to quaternary structure, monomer. Mg(2+) serves as cofactor.

The protein resides in the nucleus. It is found in the cytoplasm. The enzyme catalyses CMP + ATP = CDP + ADP. It catalyses the reaction dCMP + ATP = dCDP + ADP. The catalysed reaction is UMP + ATP = UDP + ADP. It carries out the reaction a 2'-deoxyribonucleoside 5'-diphosphate + ATP = a 2'-deoxyribonucleoside 5'-triphosphate + ADP. The enzyme catalyses a ribonucleoside 5'-diphosphate + ATP = a ribonucleoside 5'-triphosphate + ADP. Functionally, catalyzes the phosphorylation of pyrimidine nucleoside monophosphates at the expense of ATP. Plays an important role in de novo pyrimidine nucleotide biosynthesis. Has preference for UMP and CMP as phosphate acceptors. Also displays broad nucleoside diphosphate kinase activity. This chain is UMP-CMP kinase (cmpk1), found in Xenopus laevis (African clawed frog).